Consider the following 492-residue polypeptide: Probable Xaa-Pro aminopeptidase ACLA_020440 (492 aa).

Positions 272, 283, 421, and 460 each coordinate Mn(2+).

The protein belongs to the peptidase M24B family. The cofactor is Mn(2+).

It carries out the reaction Release of any N-terminal amino acid, including proline, that is linked to proline, even from a dipeptide or tripeptide.. Catalyzes the removal of a penultimate prolyl residue from the N-termini of peptides. This is Probable Xaa-Pro aminopeptidase ACLA_020440 from Aspergillus clavatus (strain ATCC 1007 / CBS 513.65 / DSM 816 / NCTC 3887 / NRRL 1 / QM 1276 / 107).